A 357-amino-acid chain; its full sequence is Serine proteinase inhibitor 1 (357 aa).

It belongs to the serpin family. Poxviruses subfamily.

It localises to the host cytoplasm. Functionally, plays a role in mediating viral host range. May act to inhibit a caspase independent form of apoptosis to allow efficient virus replication in infected cells. In Monkeypox virus, this protein is Serine proteinase inhibitor 1 (OPG208).